Here is a 434-residue protein sequence, read N- to C-terminus: Perilipin-3 (434 aa).

Residues 1 to 22 (MSADGAEADGSTQVTVEEPVQQ) form a disordered region. Serine 2 is subject to N-acetylserine. Serine 31 carries the phosphoserine modification. Residue lysine 65 is modified to N6-acetyllysine. Phosphoserine is present on serine 91. A Glycyl lysine isopeptide (Lys-Gly) (interchain with G-Cter in SUMO1) cross-link involves residue lysine 122. Serine 130 and serine 148 each carry phosphoserine. Threonine 170 is modified (phosphothreonine). 2 positions are modified to phosphoserine: serine 175 and serine 179. Threonine 216 carries the post-translational modification Phosphothreonine. Residues serine 217 and serine 241 each carry the phosphoserine modification. Tyrosine 251 carries the phosphotyrosine modification. Coiled coils occupy residues 252–277 (EHSLGKLRATKQRAQEALLQLSQVLS) and 353–377 (TNVKDQVQQARRQVEDLQATFSSIH).

The protein belongs to the perilipin family. In terms of assembly, homooligomer. Interacts with M6PR (via the cytoplasmic domain). Interacts with IGF2R (via the cytoplasmic domain). As to quaternary structure, may exist as a homodimer. Post-translationally, phosphorylation at Tyr-251 by isoform 1 of CHKA (CHKalpha2) promotes dissociation from lipid droplets: dissociation is followed by recruitment of autophagosome machinery to lipid droplets and subsequent lipid droplet lipolysis.

The protein localises to the lipid droplet. It localises to the endosome membrane. Its subcellular location is the cytoplasm. Functionally, structural component of lipid droplets, which is required for the formation and maintenance of lipid storage droplets. Required for the transport of mannose 6-phosphate receptors (MPR) from endosomes to the trans-Golgi network. This Homo sapiens (Human) protein is Perilipin-3 (PLIN3).